Reading from the N-terminus, the 261-residue chain is Spermatogenesis-associated protein 46 (261 aa).

Positions Ser-140–His-159 are disordered.

As to expression, testis-specific.

It is found in the nucleus membrane. Functionally, plays a role in spermiogenesis and fertilization. This is Spermatogenesis-associated protein 46 from Homo sapiens (Human).